The sequence spans 177 residues: MSRIAKYPVELPKGVEASIQPDQITVKGPLGTLVQSLTGDVNVAQEDGKLTFVVANDSRHANAMSGTLRALVANMVTGVSKGFERKLNLVGVGYRAQIQGDAVKLQLGFSHDVVHQLPAGVKAECPTQTEIVIKGPNKQVVGQVAAEIRKYREPEPYKGKGVRYADERVVIKETKKK.

This sequence belongs to the universal ribosomal protein uL6 family. Part of the 50S ribosomal subunit.

Functionally, this protein binds to the 23S rRNA, and is important in its secondary structure. It is located near the subunit interface in the base of the L7/L12 stalk, and near the tRNA binding site of the peptidyltransferase center. The polypeptide is Large ribosomal subunit protein uL6 (Bordetella bronchiseptica (strain ATCC BAA-588 / NCTC 13252 / RB50) (Alcaligenes bronchisepticus)).